The sequence spans 302 residues: Protein ECM11 (302 aa).

2 disordered regions span residues 1-67 (MTVI…TDKQ) and 162-187 (SLNG…GSYQ). A compositionally biased stretch (polar residues) spans 35-46 (NKPPSSINSRSG). The segment covering 56–67 (APEKKINNTDKQ) has biased composition (basic and acidic residues). The segment covering 162–171 (SLNGENTSSP) has biased composition (polar residues).

Interacts with CDC6.

The protein localises to the nucleus. Functionally, may be involved in cell wall organization and biogenesis. This is Protein ECM11 (ECM11) from Saccharomyces cerevisiae (strain ATCC 204508 / S288c) (Baker's yeast).